A 384-amino-acid polypeptide reads, in one-letter code: Eukaryotic translation initiation factor 3 subunit M (384 aa).

The PCI domain maps to 184 to 346 (ENRKAIEAMI…KKILITGAFP (163 aa)).

This sequence belongs to the eIF-3 subunit M family. As to quaternary structure, component of the eukaryotic translation initiation factor 3 (eIF-3) complex.

Its subcellular location is the cytoplasm. In terms of biological role, component of the eukaryotic translation initiation factor 3 (eIF-3) complex, which is involved in protein synthesis of a specialized repertoire of mRNAs and, together with other initiation factors, stimulates binding of mRNA and methionyl-tRNAi to the 40S ribosome. The eIF-3 complex specifically targets and initiates translation of a subset of mRNAs involved in cell proliferation. The chain is Eukaryotic translation initiation factor 3 subunit M from Schistosoma japonicum (Blood fluke).